The chain runs to 295 residues: Ribosomal protein L11 methyltransferase (295 aa).

S-adenosyl-L-methionine is bound by residues Thr138, Gly161, Asp183, and Asn230.

It belongs to the methyltransferase superfamily. PrmA family.

The protein localises to the cytoplasm. The enzyme catalyses L-lysyl-[protein] + 3 S-adenosyl-L-methionine = N(6),N(6),N(6)-trimethyl-L-lysyl-[protein] + 3 S-adenosyl-L-homocysteine + 3 H(+). Functionally, methylates ribosomal protein L11. The chain is Ribosomal protein L11 methyltransferase from Bradyrhizobium diazoefficiens (strain JCM 10833 / BCRC 13528 / IAM 13628 / NBRC 14792 / USDA 110).